A 183-amino-acid chain; its full sequence is Capsid protein (183 aa).

The disordered stretch occupies residues 136-183; sequence NAPILSTLPETTVVRRRGRSPRRRTPSPRRRRSQSPRRRRSQSRESQC. A compositionally biased stretch (basic residues) spans 149-176; the sequence is VRRRGRSPRRRTPSPRRRRSQSPRRRRS. Residues Ser-155, Ser-162, and Ser-170 each carry the phosphoserine; by host modification. The 1; half-length repeat unit spans residues 155 to 161; that stretch reads SPRRRTP. The interval 155-177 is 3 X 8 AA repeats of S-P-R-R-R-[PR]-S-Q; that stretch reads SPRRRTPSPRRRRSQSPRRRRSQ. The Bipartite nuclear localization signal signature appears at 158–175; sequence RRTPSPRRRRSQSPRRRR. 2 repeat units span residues 162–169 and 170–177. The interval 177-183 is RNA binding; that stretch reads QSRESQC.

Belongs to the orthohepadnavirus core antigen family. In terms of assembly, homodimerizes, then multimerizes. Interacts with cytosol exposed regions of viral L glycoprotein present in the reticulum-to-Golgi compartment. Interacts with human FLNB. Phosphorylated form interacts with host importin alpha; this interaction depends on the exposure of the NLS, which itself depends upon genome maturation and/or phosphorylation of the capsid protein. Interacts with host NUP153. Post-translationally, phosphorylated by host SRPK1, SRPK2, and maybe protein kinase C or GAPDH. Phosphorylation is critical for pregenomic RNA packaging. Protein kinase C phosphorylation is stimulated by HBx protein and may play a role in transport of the viral genome to the nucleus at the late step during the viral replication cycle.

Its subcellular location is the virion. The protein resides in the host cytoplasm. In terms of biological role, self assembles to form an icosahedral capsid. Most capsids appear to be large particles with an icosahedral symmetry of T=4 and consist of 240 copies of capsid protein, though a fraction forms smaller T=3 particles consisting of 180 capsid proteins. Entering capsids are transported along microtubules to the nucleus. Phosphorylation of the capsid is thought to induce exposure of nuclear localization signal in the C-terminal portion of the capsid protein that allows binding to the nuclear pore complex via the importin (karyopherin-) alpha and beta. Capsids are imported in intact form through the nuclear pore into the nuclear basket, where it probably binds NUP153. Only capsids that contain the mature viral genome can release the viral DNA and capsid protein into the nucleoplasm. Immature capsids get stuck in the basket. Capsids encapsulate the pre-genomic RNA and the P protein. Pre-genomic RNA is reverse-transcribed into DNA while the capsid is still in the cytoplasm. The capsid can then either be directed to the nucleus, providing more genomes for transcription, or bud through the endoplasmic reticulum to provide new virions. The protein is Capsid protein of Hepatitis B virus genotype B/C subtype adw (isolate Okinawa/pODW282/1998) (HBV-B).